A 431-amino-acid polypeptide reads, in one-letter code: CinA-like protein (431 aa).

The protein belongs to the CinA family.

This Chlorobium luteolum (strain DSM 273 / BCRC 81028 / 2530) (Pelodictyon luteolum) protein is CinA-like protein.